Reading from the N-terminus, the 455-residue chain is MALWGGRFQGETSALFKLFNDSLPVDYRLFEQDVVGSIAWADAIASVGIITATECSDLKKALNELLVEVKGDPAIILASGAEDIHSFVESALIAKVGDLGKKLHTGRSRNDQVATDLKLWCQSEGAALVARLQTLRSELIALAEREFDAVMPGYTHLQRAQPVTFGHWCLAYVEMIERDFSRLTDALKRANTCPLGSGALAGTAYQMDRHALALALNFASPTLNSLDSVSDRDHVVELCSTASISMMHLSRMAEDLIFFNTGEAGFISLSDEVTSGSSLMPQKKNPDALELIRGKTGRVYGSLVGILTTMKALPLAYNKDMQEDKEGLFDVVDSWAICLDMAALVLSGLVVNRPNALLAAQQGYANATELADYLVSKGMPFREAHHVVGVAVVAAIAKKIPLEGFTLAEFKTFADIIEDDVYPNLTIEACLAKRDVLGGTALTQVKQAIAAKKAG.

This sequence belongs to the lyase 1 family. Argininosuccinate lyase subfamily.

The protein localises to the cytoplasm. The enzyme catalyses 2-(N(omega)-L-arginino)succinate = fumarate + L-arginine. The protein operates within amino-acid biosynthesis; L-arginine biosynthesis; L-arginine from L-ornithine and carbamoyl phosphate: step 3/3. The chain is Argininosuccinate lyase from Shewanella oneidensis (strain ATCC 700550 / JCM 31522 / CIP 106686 / LMG 19005 / NCIMB 14063 / MR-1).